Consider the following 235-residue polypeptide: MQYRRILLKLSGEALAGKDGYGINAEMLERFAEEVKEARDMGAEIALVIGGGNIFRGVSDAAKNMDRVQADYMGMLATVINSIAFQDALERLGVYTRLQTAIKMEQMAEPFIRRRAIRHLEKGRVVIFGAGTGNPYFTTDTAASLRAIEIEADVIVKGTRVDGVYDSDPETNPSAEFFPKISYLDVIRKNLRVMDMTAITLCRENTLPIVVMNMNEKGNLSRLIRGEHVGSLVHA.

Residue 9–12 participates in ATP binding; sequence KLSG. The interval 17–22 is involved in allosteric activation by GTP; sequence GKDGYG. G51 provides a ligand contact to UMP. G52 and R56 together coordinate ATP. UMP-binding positions include D71 and 132-139; that span reads TGNPYFTT. ATP-binding residues include T159, Y165, and D168.

The protein belongs to the UMP kinase family. Homohexamer.

It is found in the cytoplasm. The catalysed reaction is UMP + ATP = UDP + ADP. It functions in the pathway pyrimidine metabolism; CTP biosynthesis via de novo pathway; UDP from UMP (UMPK route): step 1/1. With respect to regulation, allosterically activated by GTP. Inhibited by UTP. Its function is as follows. Catalyzes the reversible phosphorylation of UMP to UDP. This chain is Uridylate kinase, found in Chlorobium luteolum (strain DSM 273 / BCRC 81028 / 2530) (Pelodictyon luteolum).